Reading from the N-terminus, the 464-residue chain is IAA-amino acid hydrolase ILR1-like 6 (464 aa).

The first 24 residues, 1–24, serve as a signal peptide directing secretion; the sequence is MDNLRKLNLLSVSLTIIFVSLTIA. Mn(2+)-binding residues include C175, H177, E211, H235, and H433.

It belongs to the peptidase M20 family.

The enzyme catalyses a jasmonyl-L-amino acid + H2O = a jasmonate + an L-alpha-amino acid. Functionally, hydrolyzes certain amino acid conjugates of the plant growth regulator indole-3-acetic acid (IAA). Also hydrolyzes amino acid conjugates of jasmonic acid and 12-hydroxy jasmonic acid. This chain is IAA-amino acid hydrolase ILR1-like 6, found in Arabidopsis thaliana (Mouse-ear cress).